Here is a 515-residue protein sequence, read N- to C-terminus: Putative ribose/galactose/methyl galactoside import ATP-binding protein (515 aa).

ABC transporter domains follow at residues 26–262 and 272–511; these read LEVA…VGRE and VALG…KIMD. Residue 58–65 participates in ATP binding; it reads GENGAGKS.

It belongs to the ABC transporter superfamily. Carbohydrate importer 2 (CUT2) (TC 3.A.1.2) family.

It is found in the cell inner membrane. It catalyses the reaction D-ribose(out) + ATP + H2O = D-ribose(in) + ADP + phosphate + H(+). It carries out the reaction D-galactose(out) + ATP + H2O = D-galactose(in) + ADP + phosphate + H(+). In terms of biological role, part of an ABC transporter complex involved in carbohydrate import. Could be involved in ribose, galactose and/or methyl galactoside import. Responsible for energy coupling to the transport system. In Hahella chejuensis (strain KCTC 2396), this protein is Putative ribose/galactose/methyl galactoside import ATP-binding protein.